The following is a 520-amino-acid chain: Putative cytochrome P450 CYP13A5 (520 aa).

Position 464 (C464) interacts with heme.

This sequence belongs to the cytochrome P450 family. It depends on heme as a cofactor.

Its function is as follows. Cytochromes P450 are a group of heme-thiolate monooxygenases. They oxidize a variety of structurally unrelated compounds, including steroids, fatty acids, and xenobiotics. This chain is Putative cytochrome P450 CYP13A5 (cyp-13A5), found in Caenorhabditis elegans.